The primary structure comprises 422 residues: Phospholipase D Z (422 aa).

Residues 1–18 form the signal peptide; it reads MMMKLLFLIALFGCVVNS. Asn-53 carries an N-linked (GlcNAc...) asparagine glycan. In terms of domain architecture, PLD phosphodiesterase 1 spans 148 to 175; that stretch reads GAGILHTKVIVVDQVSAYLGSANLDWRS. Residues His-153, Lys-155, and Asp-160 contribute to the active site. 2 N-linked (GlcNAc...) asparagine glycosylation sites follow: Asn-225 and Asn-320. In terms of domain architecture, PLD phosphodiesterase 2 spans 357 to 383; that stretch reads FTRVNHAKYMVTDEQSYVGTSNWSEDY. Active-site residues include His-362, Lys-364, and Asp-369. N-linked (GlcNAc...) asparagine glycosylation occurs at Asn-378.

It belongs to the phospholipase D family.

It carries out the reaction a 1,2-diacyl-sn-glycero-3-phosphocholine + H2O = a 1,2-diacyl-sn-glycero-3-phosphate + choline + H(+). With respect to regulation, inhibited by butan-1-ol. Its function is as follows. Hydrolyzes membrane phospholipids, such as PtdCho (phosphatidylcholine), producing the free headgroup and PtdOH (phosphatidic acid; signaling molecule on its own). This Dictyostelium discoideum (Social amoeba) protein is Phospholipase D Z (pldZ).